Consider the following 317-residue polypeptide: Tegument protein UL14 homolog (317 aa).

The disordered stretch occupies residues 166–291 (IAADPHSPRS…QKWLGGIPPL (126 aa)). Basic and acidic residues predominate over residues 182–195 (KAPEDARCGARKPG). The span at 198–211 (NNYTPSAQPRSQET) shows a compositional bias: polar residues. Composition is skewed to basic and acidic residues over residues 217 to 236 (ASPD…EHHS) and 249 to 265 (SERR…KSSE).

Belongs to the alphaherpesvirinae HHV-1 UL14 protein family.

It localises to the virion tegument. Its subcellular location is the host cytoplasm. It is found in the host nucleus. Contributes to the nuclear transport of the viral transcriptional activator VP16 during the early phase of infection. Therefore, participates indirectly in the regulation of the immediate-early gene expression. Additionally, seems to be important for efficient nuclear targeting of capsids. The polypeptide is Tegument protein UL14 homolog (Equus caballus (Horse)).